A 257-amino-acid chain; its full sequence is Dihydroorotate dehydrogenase B (NAD(+)), electron transfer subunit (257 aa).

In terms of domain architecture, FAD-binding FR-type spans 2–102 (IGRERMTVAS…LGPLGNGFPL (101 aa)). FAD-binding positions include 53–56 (RPLS), 70–72 (IYR), and 77–78 (GT). C221, C226, C229, and C244 together coordinate [2Fe-2S] cluster.

It belongs to the PyrK family. Heterotetramer of 2 PyrK and 2 PyrD type B subunits. [2Fe-2S] cluster serves as cofactor. Requires FAD as cofactor.

The protein operates within pyrimidine metabolism; UMP biosynthesis via de novo pathway; orotate from (S)-dihydroorotate (NAD(+) route): step 1/1. In terms of biological role, responsible for channeling the electrons from the oxidation of dihydroorotate from the FMN redox center in the PyrD type B subunit to the ultimate electron acceptor NAD(+). This chain is Dihydroorotate dehydrogenase B (NAD(+)), electron transfer subunit, found in Bacillus caldolyticus.